The primary structure comprises 47 residues: Delta-actitoxin-Aspp1a (47 aa).

Disulfide bonds link Cys-4–Cys-44, Cys-6–Cys-34, and Cys-27–Cys-45.

Belongs to the sea anemone sodium channel inhibitory toxin family. Type I subfamily.

The protein resides in the secreted. Its subcellular location is the nematocyst. In terms of biological role, binds specifically to voltage-gated sodium channels (Nav) (site 3), thereby delaying their inactivation during signal transduction. Has a heart stimulation effect on isolated rat atria that is higher than that of Hk7a, Hk8a and Hk16a. This is Delta-actitoxin-Aspp1a from Anthopleura sp. (strain 'Zhanjiang') (Sea anemone).